Reading from the N-terminus, the 405-residue chain is Putative arsenical pump-driving ATPase (405 aa).

8–15 (GKGGVGKT) provides a ligand contact to ATP.

Belongs to the arsA ATPase family.

It catalyses the reaction arsenite(in) + ATP + H2O = arsenite(out) + ADP + phosphate + H(+). In terms of biological role, anion-transporting ATPase. Catalyzes the extrusion of arsenite. The sequence is that of Putative arsenical pump-driving ATPase from Prosthecochloris vibrioformis (Chlorobium vibrioforme).